A 75-amino-acid polypeptide reads, in one-letter code: Small ribosomal subunit protein bS18 (75 aa).

Belongs to the bacterial ribosomal protein bS18 family. Part of the 30S ribosomal subunit. Forms a tight heterodimer with protein bS6.

Binds as a heterodimer with protein bS6 to the central domain of the 16S rRNA, where it helps stabilize the platform of the 30S subunit. The sequence is that of Small ribosomal subunit protein bS18 from Cereibacter sphaeroides (strain ATCC 17029 / ATH 2.4.9) (Rhodobacter sphaeroides).